The chain runs to 119 residues: Large ribosomal subunit protein uL18 (119 aa).

The segment at 1-20 is disordered; the sequence is MISKPDKNKTRQKRHTRVRG. The span at 10–20 shows a compositional bias: basic residues; sequence TRQKRHTRVRG.

This sequence belongs to the universal ribosomal protein uL18 family. As to quaternary structure, part of the 50S ribosomal subunit; part of the 5S rRNA/L5/L18/L25 subcomplex. Contacts the 5S and 23S rRNAs.

Its function is as follows. This is one of the proteins that bind and probably mediate the attachment of the 5S RNA into the large ribosomal subunit, where it forms part of the central protuberance. This chain is Large ribosomal subunit protein uL18, found in Latilactobacillus sakei subsp. sakei (strain 23K) (Lactobacillus sakei subsp. sakei).